The primary structure comprises 509 residues: ATP synthase subunit alpha (509 aa).

169–176 (GDRQTGKT) contributes to the ATP binding site.

The protein belongs to the ATPase alpha/beta chains family. As to quaternary structure, F-type ATPases have 2 components, CF(1) - the catalytic core - and CF(0) - the membrane proton channel. CF(1) has five subunits: alpha(3), beta(3), gamma(1), delta(1), epsilon(1). CF(0) has four main subunits: a(1), b(1), b'(1) and c(9-12).

The protein localises to the cell inner membrane. It carries out the reaction ATP + H2O + 4 H(+)(in) = ADP + phosphate + 5 H(+)(out). Produces ATP from ADP in the presence of a proton gradient across the membrane. The alpha chain is a regulatory subunit. The protein is ATP synthase subunit alpha of Bradyrhizobium sp. (strain BTAi1 / ATCC BAA-1182).